Here is a 211-residue protein sequence, read N- to C-terminus: uncharacterized protein (211 aa).

Disordered stretches follow at residues 45-74 (RSCG…GALS) and 147-211 (AETR…WEEP). Over residues 48 to 71 (GRSSTGGCSPCSGPGPSSPRTSRG) the composition is skewed to low complexity. A compositionally biased stretch (polar residues) spans 195–205 (DSGSIKMSENE).

This is an uncharacterized protein from Homo sapiens (Human).